We begin with the raw amino-acid sequence, 157 residues long: Peroxiredoxin Bcp (157 aa).

The Thioredoxin domain maps to Ile-3 to Glu-156. The Cysteine sulfenic acid (-SOH) intermediate role is filled by Cys-45. Residues Cys-45 and Cys-50 are joined by a disulfide bond.

This sequence belongs to the peroxiredoxin family. BCP/PrxQ subfamily. As to quaternary structure, monomer.

It catalyses the reaction a hydroperoxide + [thioredoxin]-dithiol = an alcohol + [thioredoxin]-disulfide + H2O. In terms of biological role, thiol-specific peroxidase that catalyzes the reduction of hydrogen peroxide and organic hydroperoxides to water and alcohols, respectively. Plays a role in cell protection against oxidative stress by detoxifying peroxides and as sensor of hydrogen peroxide-mediated signaling events. This Bacillus subtilis (strain 168) protein is Peroxiredoxin Bcp (ygaF).